A 247-amino-acid chain; its full sequence is Putative methyltransferase GWCH70_2453 (247 aa).

The protein belongs to the methyltransferase superfamily.

Functionally, may be a S-adenosyl-L-methionine (SAM)-dependent methyltransferase. The protein is Putative methyltransferase GWCH70_2453 of Geobacillus sp. (strain WCH70).